Reading from the N-terminus, the 176-residue chain is ATP synthase subunit delta (176 aa).

Belongs to the ATPase delta chain family. As to quaternary structure, F-type ATPases have 2 components, F(1) - the catalytic core - and F(0) - the membrane proton channel. F(1) has five subunits: alpha(3), beta(3), gamma(1), delta(1), epsilon(1). F(0) has three main subunits: a(1), b(2) and c(10-14). The alpha and beta chains form an alternating ring which encloses part of the gamma chain. F(1) is attached to F(0) by a central stalk formed by the gamma and epsilon chains, while a peripheral stalk is formed by the delta and b chains.

The protein localises to the cell inner membrane. In terms of biological role, f(1)F(0) ATP synthase produces ATP from ADP in the presence of a proton or sodium gradient. F-type ATPases consist of two structural domains, F(1) containing the extramembraneous catalytic core and F(0) containing the membrane proton channel, linked together by a central stalk and a peripheral stalk. During catalysis, ATP synthesis in the catalytic domain of F(1) is coupled via a rotary mechanism of the central stalk subunits to proton translocation. This protein is part of the stalk that links CF(0) to CF(1). It either transmits conformational changes from CF(0) to CF(1) or is implicated in proton conduction. This chain is ATP synthase subunit delta, found in Nitratiruptor sp. (strain SB155-2).